A 323-amino-acid polypeptide reads, in one-letter code: Arginase (323 aa).

The Mn(2+) site is built by histidine 119, aspartate 142, histidine 144, and aspartate 146. Substrate-binding positions include 144 to 148 (HADIN), 155 to 157 (SKN), and aspartate 198. Aspartate 247 and aspartate 249 together coordinate Mn(2+). Residues threonine 261 and glutamate 292 each contribute to the substrate site.

It belongs to the arginase family. In terms of assembly, homotrimer. The cofactor is Mn(2+).

The enzyme catalyses L-arginine + H2O = urea + L-ornithine. It functions in the pathway nitrogen metabolism; urea cycle; L-ornithine and urea from L-arginine: step 1/1. The protein is Arginase (car1) of Schizosaccharomyces pombe (strain 972 / ATCC 24843) (Fission yeast).